A 397-amino-acid polypeptide reads, in one-letter code: Carbamoyl phosphate synthase small chain (397 aa).

The interval 1 to 204 (MKHVLRKEKT…NAKLKEKIWH (204 aa)) is CPSase. Residues Ser57, Gly252, and Gly254 each coordinate L-glutamine. The Glutamine amidotransferase type-1 domain maps to 204–391 (HVVVYDFGVK…IKLMKKSYNS (188 aa)). Cys280 acts as the Nucleophile in catalysis. L-glutamine contacts are provided by Leu281, Gln284, Asn322, and Tyr325. Residues His364 and Glu366 contribute to the active site.

Belongs to the CarA family. As to quaternary structure, composed of two chains; the small (or glutamine) chain promotes the hydrolysis of glutamine to ammonia, which is used by the large (or ammonia) chain to synthesize carbamoyl phosphate. Tetramer of heterodimers (alpha,beta)4.

The catalysed reaction is hydrogencarbonate + L-glutamine + 2 ATP + H2O = carbamoyl phosphate + L-glutamate + 2 ADP + phosphate + 2 H(+). It catalyses the reaction L-glutamine + H2O = L-glutamate + NH4(+). It functions in the pathway amino-acid biosynthesis; L-arginine biosynthesis; carbamoyl phosphate from bicarbonate: step 1/1. Its pathway is pyrimidine metabolism; UMP biosynthesis via de novo pathway; (S)-dihydroorotate from bicarbonate: step 1/3. Its function is as follows. Small subunit of the glutamine-dependent carbamoyl phosphate synthetase (CPSase). CPSase catalyzes the formation of carbamoyl phosphate from the ammonia moiety of glutamine, carbonate, and phosphate donated by ATP, constituting the first step of 2 biosynthetic pathways, one leading to arginine and/or urea and the other to pyrimidine nucleotides. The small subunit (glutamine amidotransferase) binds and cleaves glutamine to supply the large subunit with the substrate ammonia. This chain is Carbamoyl phosphate synthase small chain, found in Buchnera aphidicola subsp. Baizongia pistaciae (strain Bp).